The primary structure comprises 72 residues: Translation initiation factor IF-1 (72 aa).

One can recognise an S1-like domain in the interval 1–72 (MAKEELLEFP…TKGRITYRFK (72 aa)).

It belongs to the IF-1 family. As to quaternary structure, component of the 30S ribosomal translation pre-initiation complex which assembles on the 30S ribosome in the order IF-2 and IF-3, IF-1 and N-formylmethionyl-tRNA(fMet); mRNA recruitment can occur at any time during PIC assembly.

The protein resides in the cytoplasm. One of the essential components for the initiation of protein synthesis. Stabilizes the binding of IF-2 and IF-3 on the 30S subunit to which N-formylmethionyl-tRNA(fMet) subsequently binds. Helps modulate mRNA selection, yielding the 30S pre-initiation complex (PIC). Upon addition of the 50S ribosomal subunit IF-1, IF-2 and IF-3 are released leaving the mature 70S translation initiation complex. This is Translation initiation factor IF-1 from Maricaulis maris (strain MCS10) (Caulobacter maris).